We begin with the raw amino-acid sequence, 1441 residues long: MSYAAYKMMHWPTGVDHCAAGFVTHSPSDAAAFFTAATVGPGPEGDIDSAAAASRPRRLGPSPNLVVAAANVLEVYAVRAETAAEDGGGGTQPSSSSGAVLDGISGARLELVCYYRLHGNIESMTVLSDGAENRRATIALAFKDAKITCLEFDDAIHGLRTSSMHCFEGPEWQHLKRGRESFAWGPVIKADPLGRCGAALAYGLQMIILKAAQVGHSLVGEDEPTCALSSTAVCIESSYLIDLRALDMNHVKDFAFVHGYIEPVLVILHEQEPTWAGRILSKHHTCMISAFSISMTLKQHPVIWSAANLPHDAYQLLAVPPPISGVLVICANSIHYHSQSTSCSLDLNNFSSHPDGSPEISKSNFQVELDAAKATWLSNDIVMFSTKAGEMLLLTVVYDGRVVQRLDLMKSKASVLSSAVTSIGNSFFFLGSRLGDSLLVQFSYCASKSVLQDLTNERSADIEGDLPFSKRLKRIPSDVLQDVTSVEELSFQNIIAPNSLESAQKISYIVRDALINVGPLKDFSYGLRANADPNAMGNAKQSNYELVCCSGHGKNGSLSVLQQSIRPDLITEVELPSCRGIWTVYYKSYRGQMAEDNEYHAYLIISLENRTMVLETGDDLGEVTETVDYFVQASTIAAGNLFGRRRVIQVYGKGARVLDGSFMTQELNFTTHASESSSSEALGVACASIADPYVLLKMVDGSVQLLIGDYCTCTLSVNAPSIFISSSERIAACTLYRDRGPEPWLTKTRSDAWLSTGIAEAIDGNGTSSHDQSDIYCIICYESGKLEIFEVPSFRCVFSVENFISGEALLVDKFSQLIYEDSTKERYDCTKASLKKEAGDSIRIVELAMHRWSGQFSRPFLFGLLNDGTLLCYHAFSYEASESNVKRVPLSPQGSADHHNASDSRLRNLRFHRVSIDITSREDIPTLGRPRITTFNNVGGYEGLFLSGTRPAWVMVCRQRLRVHPQLCDGPIEAFTVLHNVNCSHGFIYVTSQGFLKICQLPSAYNYDSYWPVQKVPLHGTPHQVTYYAEQSLYPLIVSVPVVRPLNQVLSSMADQESVHHMDNDVTSTDALHKTYTVDEFEVRILELEKPGGHWETKSTIPMQLFENALTVRIVTLHNTTTKENETLLAIGTAYVLGEDVAARGRVLLFSFTKSENSQNLVTEVYSKESKGAVSAVASLQGHLLIASGPKITLNKWTGAELTAVAFYDAPLHVVSLNIVKNFVLFGDIHKSIYFLSWKEQGSQLSLLAKDFGSLDCFATEFLIDGSTLSLVASDSDKNVQIFYYAPKMVESWKGQKLLSRAEFHVGAHITKFLRLQMLPTQGLSSEKTNRFALLFGNLDGGIGCIAPIDELTFRRLQSLQRKLVDAVPHVCGLNPRSFRQFHSNGKGHRPGPDNIIDFELLCSYEMLSLDEQLDVAQQIGTTRSQILSNFSDISLGTSFL.

It belongs to the CPSF1 family. CPSF is a heterotetramer composed of four distinct subunits 160, 100, 70 and 30 kDa.

Its subcellular location is the nucleus. CPSF plays a key role in pre-mRNA 3'-end formation, recognizing the AAUAAA signal sequence and interacting with poly(A)polymerase and other factors to bring about cleavage and poly(A) addition. This subunit is involved in the RNA recognition step of the polyadenylation reaction. This Oryza sativa subsp. japonica (Rice) protein is Probable cleavage and polyadenylation specificity factor subunit 1.